Reading from the N-terminus, the 355-residue chain is Erythronate-4-phosphate dehydrogenase (355 aa).

Positions 45 and 66 each coordinate substrate. NAD(+) is bound at residue Asp-146. Arg-206 is a catalytic residue. Asp-229 is an NAD(+) binding site. Residue Glu-234 is part of the active site. His-251 serves as the catalytic Proton donor. Gly-254 contacts NAD(+). Substrate is bound at residue Tyr-255.

This sequence belongs to the D-isomer specific 2-hydroxyacid dehydrogenase family. PdxB subfamily. Homodimer.

It is found in the cytoplasm. The enzyme catalyses 4-phospho-D-erythronate + NAD(+) = (R)-3-hydroxy-2-oxo-4-phosphooxybutanoate + NADH + H(+). Its pathway is cofactor biosynthesis; pyridoxine 5'-phosphate biosynthesis; pyridoxine 5'-phosphate from D-erythrose 4-phosphate: step 2/5. Its function is as follows. Catalyzes the oxidation of erythronate-4-phosphate to 3-hydroxy-2-oxo-4-phosphonooxybutanoate. This Acinetobacter baumannii (strain ACICU) protein is Erythronate-4-phosphate dehydrogenase.